We begin with the raw amino-acid sequence, 263 residues long: L-erythrulose-1-phosphate isomerase (263 aa).

Histidine 106 functions as the Electrophile in the catalytic mechanism. The active-site Proton acceptor is glutamate 178.

The protein belongs to the triosephosphate isomerase family.

The enzyme catalyses L-erythrulose 1-phosphate = D-erythrulose 4-phosphate. Its pathway is carbohydrate metabolism; L-threitol degradation. Catalyzes the isomerization of L-erythrulose-1P to D-erythrulose-4P. Involved in the degradation pathway of L-threitol, that allows M.smegmatis to grow on this compound as the sole carbon source. The chain is L-erythrulose-1-phosphate isomerase from Mycolicibacterium smegmatis (strain ATCC 700084 / mc(2)155) (Mycobacterium smegmatis).